A 560-amino-acid chain; its full sequence is Serine palmitoyltransferase 2 (560 aa).

The chain crosses the membrane as a helical span at residues 65–85 (PMLVAVLTYVGYGVLTLFGYL). Lys377 carries the post-translational modification N6-(pyridoxal phosphate)lysine.

It belongs to the class-II pyridoxal-phosphate-dependent aminotransferase family. Component of the serine palmitoyltransferase (SPT) complex, which is composed of SPTLC1, SPTLC2 or SPTLC3 and SPTSSA or SPTSSB. The heterodimer consisting of SPTLC1 and SPTLC2/SPTLC3 forms the catalytic core of the enzyme, while SPTSSA or SPTSSB subunits determine substrate specificity. SPT also interacts with ORMDL proteins, especially ORMDL3, which negatively regulate SPT activity in the presence of ceramides. Forms dimers of heterodimers with SPTLC1. Pyridoxal 5'-phosphate is required as a cofactor. As to expression, expressed in astrocytes.

The protein resides in the endoplasmic reticulum membrane. It carries out the reaction L-serine + hexadecanoyl-CoA + H(+) = 3-oxosphinganine + CO2 + CoA. The catalysed reaction is octadecanoyl-CoA + L-serine + H(+) = 3-oxoeicosasphinganine + CO2 + CoA. It participates in lipid metabolism; sphingolipid metabolism. Its activity is regulated as follows. SPT complex catalytic activity is negatively regulated by ORMDL proteins, including ORMDL3, in the presence of ceramides. This mechanism allows to maintain ceramide levels at sufficient concentrations for the production of complex sphingolipids, but which prevents the accumulation of ceramides to levels that trigger apoptosis. In terms of biological role, component of the serine palmitoyltransferase multisubunit enzyme (SPT) that catalyzes the initial and rate-limiting step in sphingolipid biosynthesis by condensing L-serine and activated acyl-CoA (most commonly palmitoyl-CoA) to form long-chain bases. The SPT complex is composed of SPTLC1, SPTLC2 or SPTLC3 and SPTSSA or SPTSSB. Within this complex, the heterodimer consisting of SPTLC1 and SPTLC2/SPTLC3 forms the catalytic core. The composition of the serine palmitoyltransferase (SPT) complex determines the substrate preference. The SPTLC1-SPTLC2-SPTSSA complex shows a strong preference for C16-CoA substrate, while the SPTLC1-SPTLC3-SPTSSA isozyme uses both C14-CoA and C16-CoA as substrates, with a slight preference for C14-CoA. The SPTLC1-SPTLC2-SPTSSB complex shows a strong preference for C18-CoA substrate, while the SPTLC1-SPTLC3-SPTSSB isozyme displays an ability to use a broader range of acyl-CoAs, without apparent preference. Crucial for adipogenesis. The polypeptide is Serine palmitoyltransferase 2 (Rattus norvegicus (Rat)).